A 321-amino-acid chain; its full sequence is PI-PLC X domain-containing protein 3 (321 aa).

The PI-PLC X-box domain maps to Ser22–Ser197. Active-site residues include His37 and His114.

The chain is PI-PLC X domain-containing protein 3 (PLCXD3) from Bos taurus (Bovine).